Reading from the N-terminus, the 282-residue chain is Inositol oxygenase (282 aa).

The segment at 1 to 25 (MKDPDPSQVYRPDMDPEAAKDKGSF) is disordered. Positions 12-24 (PDMDPEAAKDKGS) are enriched in basic and acidic residues. A substrate-binding site is contributed by R26. Position 30 is a phosphoserine (S30). 82 to 84 (DES) is a binding site for substrate. Positions 95, 120, and 121 each coordinate Fe cation. Substrate contacts are provided by residues K124 and 138–139 (GD). Positions 191, 217, and 250 each coordinate Fe cation. Position 217–218 (217–218 (HS)) interacts with substrate.

This sequence belongs to the myo-inositol oxygenase family. Fe cation is required as a cofactor. In terms of processing, the N-terminus is blocked. In terms of tissue distribution, kidney specific.

It is found in the cytoplasm. It catalyses the reaction myo-inositol + O2 = D-glucuronate + H2O + H(+). It functions in the pathway polyol metabolism; myo-inositol degradation into D-glucuronate; D-glucuronate from myo-inositol: step 1/1. The polypeptide is Inositol oxygenase (MIOX) (Sus scrofa (Pig)).